We begin with the raw amino-acid sequence, 612 residues long: Beta-mannosyltransferase 5 (612 aa).

At 1 to 12 (MVQKQYRFAPKS) the chain is on the cytoplasmic side. Residues 13 to 33 (IFTFVFLCFVAIVVIISTSSL) form a helical membrane-spanning segment. The Extracellular portion of the chain corresponds to 34–612 (VQVEESLDPI…YRAHLKRWQN (579 aa)). N-linked (GlcNAc...) asparagine glycans are attached at residues asparagine 224, asparagine 230, and asparagine 480.

Belongs to the BMT family.

It is found in the membrane. Its function is as follows. Beta-mannosyltransferase involved in cell wall biosynthesis. Required for beta-1,2-mannose transfer on phospholipomannan. The sequence is that of Beta-mannosyltransferase 5 (BMT5) from Candida albicans (strain SC5314 / ATCC MYA-2876) (Yeast).